A 20-amino-acid chain; its full sequence is Non-specific lipid-transfer protein (20 aa).

Belongs to the plant LTP family.

Its function is as follows. Plant non-specific lipid-transfer proteins transfer phospholipids as well as galactolipids across membranes. May play a role in wax or cutin deposition in the cell walls of expanding epidermal cells and certain secretory tissues. This Citrus limon (Lemon) protein is Non-specific lipid-transfer protein.